Here is a 121-residue protein sequence, read N- to C-terminus: Large ribosomal subunit protein uL14 (121 aa).

Belongs to the universal ribosomal protein uL14 family. In terms of assembly, part of the 50S ribosomal subunit. Forms a cluster with proteins L3 and L19. In the 70S ribosome, L14 and L19 interact and together make contacts with the 16S rRNA in bridges B5 and B8.

Its function is as follows. Binds to 23S rRNA. Forms part of two intersubunit bridges in the 70S ribosome. The protein is Large ribosomal subunit protein uL14 of Bacteroides fragilis (strain ATCC 25285 / DSM 2151 / CCUG 4856 / JCM 11019 / LMG 10263 / NCTC 9343 / Onslow / VPI 2553 / EN-2).